Reading from the N-terminus, the 543-residue chain is MTLLTQIPEWRALETHYRAIRDVHLRRLFAEDPGRGERMTAEAAGLFFDYSKNRVTDETLRLLMALAEARGLRARIDAMFRGERINITENRAVLHVALRAPRGAVILVDGVNVVPDVHAVLDRMAAFAEQVRSGAWSGFTGKPIRNIVNIGIGGSDLGPVMAYEALRSYSRRNLTLRFVSNIDGNDFAEATRDLDPAETLFIVASKTFTTLETMTNARTARAWLLAALGDDAAVARHFVAVSTNAAEVAKFGIDTANMFGFWDWVGGRYSMTSAIGLSTMIALGPDHFRDMLAGFHAMDEHFRTAPFDRNLPVIHGLLTVWYANFFGVETVAILPYDNYLKRFPAYLQQLTMESNGKSVTLSGEPVTYQTGPIYWGEPGTNGQHSFYQLIHQGTRLVLCDFIGFAETLNPLGAHHDLLMANMFAQAEALAFGKTTEEALAEGTPAWLAPHRTFPGNRPSNTFLAERLTPAVLGALVALYEHSVFTQGAIWDINSFDQWGVELGKVLAGRIAPELMSEVAPSPAHDSSTNALIRRYRAWRGRAL.

The active-site Proton donor is the glutamate 353. Catalysis depends on residues histidine 384 and lysine 504.

It belongs to the GPI family.

The protein localises to the cytoplasm. The catalysed reaction is alpha-D-glucose 6-phosphate = beta-D-fructose 6-phosphate. It functions in the pathway carbohydrate biosynthesis; gluconeogenesis. Its pathway is carbohydrate degradation; glycolysis; D-glyceraldehyde 3-phosphate and glycerone phosphate from D-glucose: step 2/4. Catalyzes the reversible isomerization of glucose-6-phosphate to fructose-6-phosphate. This is Glucose-6-phosphate isomerase from Roseiflexus castenholzii (strain DSM 13941 / HLO8).